The chain runs to 379 residues: Queuine tRNA-ribosyltransferase (379 aa).

Aspartate 94 (proton acceptor) is an active-site residue. Substrate-binding positions include 94-98, aspartate 148, glutamine 191, and glycine 218; that span reads DSGGF. Positions 249-255 are RNA binding; the sequence is GVGSPDA. The active-site Nucleophile is aspartate 268. An RNA binding; important for wobble base 34 recognition region spans residues 273–277; sequence TRIAR. 4 residues coordinate Zn(2+): cysteine 306, cysteine 308, cysteine 311, and histidine 337.

This sequence belongs to the queuine tRNA-ribosyltransferase family. In terms of assembly, homodimer. Within each dimer, one monomer is responsible for RNA recognition and catalysis, while the other monomer binds to the replacement base PreQ1. It depends on Zn(2+) as a cofactor.

It carries out the reaction 7-aminomethyl-7-carbaguanine + guanosine(34) in tRNA = 7-aminomethyl-7-carbaguanosine(34) in tRNA + guanine. It participates in tRNA modification; tRNA-queuosine biosynthesis. In terms of biological role, catalyzes the base-exchange of a guanine (G) residue with the queuine precursor 7-aminomethyl-7-deazaguanine (PreQ1) at position 34 (anticodon wobble position) in tRNAs with GU(N) anticodons (tRNA-Asp, -Asn, -His and -Tyr). Catalysis occurs through a double-displacement mechanism. The nucleophile active site attacks the C1' of nucleotide 34 to detach the guanine base from the RNA, forming a covalent enzyme-RNA intermediate. The proton acceptor active site deprotonates the incoming PreQ1, allowing a nucleophilic attack on the C1' of the ribose to form the product. After dissociation, two additional enzymatic reactions on the tRNA convert PreQ1 to queuine (Q), resulting in the hypermodified nucleoside queuosine (7-(((4,5-cis-dihydroxy-2-cyclopenten-1-yl)amino)methyl)-7-deazaguanosine). The polypeptide is Queuine tRNA-ribosyltransferase (Staphylococcus aureus (strain bovine RF122 / ET3-1)).